The following is a 407-amino-acid chain: 5-aminolevulinate synthase 2 (407 aa).

Positions 21 and 137 each coordinate substrate. Pyridoxal 5'-phosphate is bound by residues Ser-189, His-217, and Thr-245. Lys-248 is a catalytic residue. Lys-248 is modified (N6-(pyridoxal phosphate)lysine). Pyridoxal 5'-phosphate-binding residues include Thr-277 and Thr-278. Thr-363 contributes to the substrate binding site.

This sequence belongs to the class-II pyridoxal-phosphate-dependent aminotransferase family. In terms of assembly, homodimer. Requires pyridoxal 5'-phosphate as cofactor.

It catalyses the reaction succinyl-CoA + glycine + H(+) = 5-aminolevulinate + CO2 + CoA. Its pathway is porphyrin-containing compound metabolism; protoporphyrin-IX biosynthesis; 5-aminolevulinate from glycine: step 1/1. The polypeptide is 5-aminolevulinate synthase 2 (hemT) (Cereibacter sphaeroides (strain ATCC 17023 / DSM 158 / JCM 6121 / CCUG 31486 / LMG 2827 / NBRC 12203 / NCIMB 8253 / ATH 2.4.1.) (Rhodobacter sphaeroides)).